A 525-amino-acid chain; its full sequence is Ent-kaurene oxidase (525 aa).

Residues 31–51 (VHWLIYVAFGAWLCSYVIHVL) form a helical membrane-spanning segment. C466 contacts heme.

Belongs to the cytochrome P450 family. It depends on heme as a cofactor.

It is found in the membrane. The catalysed reaction is ent-kaur-16-ene + 3 reduced [NADPH--hemoprotein reductase] + 3 O2 = ent-kaur-16-en-19-oate + 3 oxidized [NADPH--hemoprotein reductase] + 4 H2O + 4 H(+). The protein operates within plant hormone biosynthesis; gibberellin biosynthesis. In terms of biological role, catalyzes three successive oxidations of the 4-methyl group of ent-kaurene giving kaurenoic acid, a key step in gibberellin (GA) biosynthesis. In Gibberella intermedia (Bulb rot disease fungus), this protein is Ent-kaurene oxidase (CYP503A1).